We begin with the raw amino-acid sequence, 200 residues long: Chromophore lyase CpcT/CpeT 2 (200 aa).

The protein belongs to the CpcT/CpeT biliprotein lyase family.

Covalently attaches a chromophore to Cys residue(s) of phycobiliproteins. In Microcystis aeruginosa (strain NIES-843 / IAM M-2473), this protein is Chromophore lyase CpcT/CpeT 2.